The chain runs to 195 residues: UPF0314 protein RHE_CH03951 (195 aa).

4 consecutive transmembrane segments (helical) span residues 14–34 (AFWFVACLAVLVAQIIAEYLM), 64–84 (WYTPSHIIHGFLFYGLGYLIL), 128–148 (DSILNSAMDTVFMCLGFFFAA), and 150–170 (APVALTVVIAIFFEIFTGYVI).

It belongs to the UPF0314 family.

Its subcellular location is the cell membrane. This Rhizobium etli (strain ATCC 51251 / DSM 11541 / JCM 21823 / NBRC 15573 / CFN 42) protein is UPF0314 protein RHE_CH03951.